The following is a 316-amino-acid chain: Probable cell division protein WhiA (316 aa).

The H-T-H motif DNA-binding region spans 275-309; it reads TLKELGEMVASGKISKSGINHRLRKLDEIAEQLRT.

The protein belongs to the WhiA family.

Functionally, involved in cell division and chromosome segregation. This chain is Probable cell division protein WhiA, found in Bacillus velezensis (strain DSM 23117 / BGSC 10A6 / LMG 26770 / FZB42) (Bacillus amyloliquefaciens subsp. plantarum).